The following is a 291-amino-acid chain: Protein US2 (291 aa).

An N-acetylglycine; by host; partial modification is found at Gly2. A disordered region spans residues 251-270 (PEVPDEQPTSPGRGPQETDP).

Belongs to the herpesviridae HHV-1 US2 protein family. As to quaternary structure, interacts with host KRT18.

The protein localises to the host cytoplasm. Its subcellular location is the host nucleus. The sequence is that of Protein US2 from Homo sapiens (Human).